We begin with the raw amino-acid sequence, 725 residues long: NAD(+) hydrolase SARM1 (725 aa).

A mitochondrion-targeting transit peptide spans 1–27 (MVLTILFSAYKLCRFFAMSSPRPGAER). The stretch at 60–100 (EVQGALERALPELQQALSALKQAGGGRAVGAGLAEVFQLVE) is one ARM 1 repeat. NAD(+)-binding positions include Trp103, Arg110, 149 to 158 (EQILVAENRR), and 191 to 194 (HMFK). ARM repeat units lie at residues 114–153 (QGLC…QILV), 155–194 (ENRR…HMFK), 197–236 (EETC…NCAM), 238–281 (GGQA…LATN), 282–315 (KEVE…CLVD), 316–355 (ASDT…AEAV), and 360–403 (KNRN…EEVP). SAM domains are found at residues 413 to 477 (WKEA…LKTF) and 483 to 549 (CDRS…MLHS). Phosphoserine is present on residues Ser549 and Ser559. The region spanning 561 to 704 (DVPDVFISYR…KIIRFLQGRS (144 aa)) is the TIR domain. Residues 570–571 (RR) and Glu600 contribute to the NAD(+) site. The active site involves Glu643. The segment at 705–725 (SRDSSAGSDTSLEGAAPMGPT) is disordered.

This sequence belongs to the SARM1 family. As to quaternary structure, homooctamer; forms an octameric ring via SAM domains. Interacts with TICAM1/TRIF and thereby interferes with TICAM1/TRIF function. Interacts with MAPK10/JNK3 and SDC2 (via cytoplasmic domain). Phosphorylation at Ser-549 by JNK kinases (MAPK8, MAPK9 and /or MAPK10) enhance the NAD(+) hydrolase (NADase) activity. Phosphorylation at Ser-549 and subsequent activation takes place in response to oxidative stress conditions and inhibits mitochondrial respiration. As to expression, highest expression seen in the spleen and the brain, followed by lung, kidney, liver and other tissues.

It localises to the cytoplasm. The protein localises to the cell projection. Its subcellular location is the axon. It is found in the dendrite. The protein resides in the synapse. It localises to the mitochondrion. It carries out the reaction NAD(+) + H2O = ADP-D-ribose + nicotinamide + H(+). The enzyme catalyses NAD(+) = cyclic ADP-beta-D-ribose + nicotinamide + H(+). The catalysed reaction is NADP(+) + H2O = ADP-D-ribose 2'-phosphate + nicotinamide + H(+). Autoinhibited: in the inactive state, the enzymatic TIR domain is held apart by the autoinhibiting ARM repeats. NAD(+)-binding to ARM repeats maintains an inactive state by promoting interaction between ARM repeats and the TIR domain, thereby facilitating inhibition of the enzymatic TIR domain. Following activation, possibly by nicotinamide mononucleotide (NMN), auto-inhibitory interactions are released, allowing self-association of the TIR domains and subsequent activation of the NAD(+) hydrolase (NADase) activity. Self-association of TIR domains is facilitated by the octamer of SAM domains. Functionally, NAD(+) hydrolase, which plays a key role in axonal degeneration following injury by regulating NAD(+) metabolism. Acts as a negative regulator of MYD88- and TRIF-dependent toll-like receptor signaling pathway by promoting Wallerian degeneration, an injury-induced form of programmed subcellular death which involves degeneration of an axon distal to the injury site. Wallerian degeneration is triggered by NAD(+) depletion: in response to injury, SARM1 is activated and catalyzes cleavage of NAD(+) into ADP-D-ribose (ADPR), cyclic ADPR (cADPR) and nicotinamide; NAD(+) cleavage promoting cytoskeletal degradation and axon destruction. Also able to hydrolyze NADP(+), but not other NAD(+)-related molecules. Can activate neuronal cell death in response to stress. Regulates dendritic arborization through the MAPK4-JNK pathway. Involved in innate immune response: inhibits both TICAM1/TRIF- and MYD88-dependent activation of JUN/AP-1, TRIF-dependent activation of NF-kappa-B and IRF3, and the phosphorylation of MAPK14/p38. This is NAD(+) hydrolase SARM1 from Sus scrofa (Pig).